A 389-amino-acid polypeptide reads, in one-letter code: Urotensin-2 receptor (389 aa).

Polar residues-rich tracts occupy residues 1 to 10 (MALTPESPSS) and 28 to 39 (PNATLNSSWASP). The segment at 1–39 (MALTPESPSSFPGLAAIGSSVPEPPGSPNATLNSSWASP) is disordered. Residues 1–54 (MALTPESPSSFPGLAAIGSSVPEPPGSPNATLNSSWASPTEPSSLEDLVATGAI) lie on the Extracellular side of the membrane. Asn29 and Asn33 each carry an N-linked (GlcNAc...) asparagine glycan. A helical membrane pass occupies residues 55 to 77 (GTLLSAMGVVGVVGNAYTLVVTC). Topologically, residues 78 to 87 (RSLRAVASMY) are cytoplasmic. A helical transmembrane segment spans residues 88 to 113 (IYVVNLALADLLYLLSIPFIVATYIT). Over 114-124 (KEWHFGDVGCR) the chain is Extracellular. Cysteines 123 and 199 form a disulfide. Residues 125 to 146 (VLFSLDFLTMHASIFTLTVMSS) traverse the membrane as a helical segment. Topologically, residues 147–167 (ERYAAVLRPLDTVQRPKGYRK) are cytoplasmic. Residues 168-186 (LLALGTWLLALLLTLPVML) traverse the membrane as a helical segment. The Extracellular portion of the chain corresponds to 187–209 (AMRLVRRGPKSLCLPAWGPRAHR). A helical membrane pass occupies residues 210–232 (AYLTLLFATSIAGPGLLIGLLYA). Topologically, residues 233 to 258 (RLARAYRRSQRASFKRARRPGARALR) are cytoplasmic. The helical transmembrane segment at 259–284 (LVLGIVLLFWACFLPFWLWQLLAQYR) threads the bilayer. Residues 285–297 (EAPLAPRTARIVN) are Extracellular-facing. Residues 298–318 (YLTTCLTYGNSCANPFLYTLL) form a helical membrane-spanning segment. Residues 319 to 389 (TRNYRDHLRG…PALESPGDPA (71 aa)) are Cytoplasmic-facing. The segment at 328 to 366 (GRVRSPGSGGVRGPVPSLQPRARFQRGSGRSLSSCSPQP) is disordered. The span at 355 to 366 (SGRSLSSCSPQP) shows a compositional bias: polar residues.

Belongs to the G-protein coupled receptor 1 family.

It is found in the cell membrane. Its function is as follows. High affinity receptor for urotensin-2 and urotensin-2B. The activity of this receptor is mediated by a G-protein that activate a phosphatidylinositol-calcium second messenger system. The sequence is that of Urotensin-2 receptor (UTS2R) from Macaca mulatta (Rhesus macaque).